The following is a 374-amino-acid chain: Probable neutral protease 2 homolog ARB_00849 (374 aa).

Residues 1-19 (MKFLTALSAIGALVATATA) form the signal peptide. A propeptide spanning residues 20–189 (AAVPNTPAKQ…KKSRGTIDKR (170 aa)) is cleaved from the precursor. Disulfide bonds link C197–C268 and C275–C293. Position 318 (H318) interacts with Zn(2+). Residue E319 is part of the active site. H322 and D333 together coordinate Zn(2+).

Belongs to the peptidase M35 family. The cofactor is Zn(2+).

It is found in the secreted. It catalyses the reaction Preferential cleavage of bonds with hydrophobic residues in P1'. Also 3-Asn-|-Gln-4 and 8-Gly-|-Ser-9 bonds in insulin B chain.. Probable secreted metalloprotease that shows high activities on basic nuclear substrates such as histone and protamine. May be involved in virulence. The protein is Probable neutral protease 2 homolog ARB_00849 of Arthroderma benhamiae (strain ATCC MYA-4681 / CBS 112371) (Trichophyton mentagrophytes).